The following is a 323-amino-acid chain: uncharacterized protein (323 aa).

A run of 2 helical transmembrane segments spans residues 232-252 (LASY…FIVL) and 267-287 (SLIV…GVIG).

This sequence belongs to the glycosyltransferase 2 family. GtrB subfamily.

The protein resides in the cell membrane. This is an uncharacterized protein from Bacillus subtilis (strain 168).